The sequence spans 247 residues: ATP synthase subunit a, chloroplastic (247 aa).

5 consecutive transmembrane segments (helical) span residues 38–58, 95–115, 134–154, 199–219, and 220–240; these read QVLITSWVVIAILLGSAIIAV, VPFIGTMFLFIFVSNWSGALL, INTTVALALLTSVAYFYAGLS, LVVVVLVSLVPLVVPIPVMFL, and GLFTSGIQALIFATLAAAYIG.

This sequence belongs to the ATPase A chain family. In terms of assembly, F-type ATPases have 2 components, CF(1) - the catalytic core - and CF(0) - the membrane proton channel. CF(1) has five subunits: alpha(3), beta(3), gamma(1), delta(1), epsilon(1). CF(0) has four main subunits: a, b, b' and c.

The protein localises to the plastid. It localises to the chloroplast thylakoid membrane. In terms of biological role, key component of the proton channel; it plays a direct role in the translocation of protons across the membrane. The polypeptide is ATP synthase subunit a, chloroplastic (Cucumis sativus (Cucumber)).